The following is a 478-amino-acid chain: Kynurenine 3-monooxygenase (478 aa).

FAD contacts are provided by residues Val19, 37-40 (YEAR), and Ala57. Positions 85 and 99 each coordinate L-kynurenine. FAD-binding positions include Arg111, Leu136, Thr172, Asp304, and 317 to 318 (MN). 2 residues coordinate L-kynurenine: Asn363 and Tyr398. 2 consecutive transmembrane segments (helical) span residues 385–404 (FLHALMPSTFIPLYTMVAFT) and 425–445 (GLFVLGSLVAIGSAYILVHHL).

This sequence belongs to the aromatic-ring hydroxylase family. KMO subfamily. FAD serves as cofactor. Highest activity in liver and kidney. Low activity in spleen, stomach, intestinal tract, esophagus, heart and lung.

It localises to the mitochondrion outer membrane. The catalysed reaction is L-kynurenine + NADPH + O2 + H(+) = 3-hydroxy-L-kynurenine + NADP(+) + H2O. It functions in the pathway cofactor biosynthesis; NAD(+) biosynthesis; quinolinate from L-kynurenine: step 1/3. In terms of biological role, catalyzes the hydroxylation of L-kynurenine (L-Kyn) to form 3-hydroxy-L-kynurenine (L-3OHKyn). Required for synthesis of quinolinic acid, a neurotoxic NMDA receptor antagonist and potential endogenous inhibitor of NMDA receptor signaling in axonal targeting, synaptogenesis and apoptosis during brain development. Quinolinic acid may also affect NMDA receptor signaling in pancreatic beta cells, osteoblasts, myocardial cells, and the gastrointestinal tract. The sequence is that of Kynurenine 3-monooxygenase from Rattus norvegicus (Rat).